The following is a 430-amino-acid chain: MNFVEELRWRGMVHDMMPGTEELLAKEQVTAYVGIDPTADSLHIGHLCGVMILRHFQRCGHKPLALIGGATGMIGDPSGKSAERNLLDEETLRHNQACIKKQLAKFLDFESDAPNRAELVNNYDWMKEFTFLDFAREVGKHITVNYMMAKESVKKRLNGEARDGLSFTEFTYQLLQGYDFLHLYETKGCKLQMGGSDQWGNITTGTELIRRTNGGEAYALTCPLITKADGGKFGKTESGNIWLDPRYTSPYKFYQFWLNVSDADAERYIKIFTSLDKAEIDGLVAEHNEAPHLRVLQKRLAKEVTVMVHSEEDYNAAVDASNILFGNATSDALKKLDEDTLLAVFEGVPQFEISRDALVEGVKAVDLFVDNAAVFASKGEMRKLVQGGGVSLNKEKLAAFDQVITTADLLDEKYLLVQRGKKNYYLIIAK.

Residue Y32 participates in L-tyrosine binding. Residues 37 to 46 (PTADSLHIGH) carry the 'HIGH' region motif. Residues Y172 and Q176 each contribute to the L-tyrosine site. The short motif at 232-236 (KFGKT) is the 'KMSKS' region element. Position 235 (K235) interacts with ATP. The S4 RNA-binding domain occupies 362–429 (VKAVDLFVDN…GKKNYYLIIA (68 aa)).

Belongs to the class-I aminoacyl-tRNA synthetase family. TyrS type 1 subfamily. As to quaternary structure, homodimer.

It localises to the cytoplasm. The enzyme catalyses tRNA(Tyr) + L-tyrosine + ATP = L-tyrosyl-tRNA(Tyr) + AMP + diphosphate + H(+). Functionally, catalyzes the attachment of tyrosine to tRNA(Tyr) in a two-step reaction: tyrosine is first activated by ATP to form Tyr-AMP and then transferred to the acceptor end of tRNA(Tyr). The protein is Tyrosine--tRNA ligase of Bacteroides fragilis (strain YCH46).